A 306-amino-acid chain; its full sequence is ClpXP adapter protein SpxH (306 aa).

The protein belongs to the SpxH family. As to quaternary structure, interacts with Spx.

It is found in the cytoplasm. Adapter protein required for efficient degradation of Spx by ClpXP under non-stress conditions. Interaction with Spx stabilizes Spx and exposes the C-terminus of Spx for recognition and proteolysis by ClpXP. The sequence is that of ClpXP adapter protein SpxH from Halalkalibacterium halodurans (strain ATCC BAA-125 / DSM 18197 / FERM 7344 / JCM 9153 / C-125) (Bacillus halodurans).